The following is a 573-amino-acid chain: MRTENTATLNLIWGALILEELARLGVQHVCMAPGSRSTPLTLAAAQQTKLQRHLHFDERGLGFMALGLAKASRAPVAIITTSGTAVANLYPAIVEAWLTHVPLIVLSGDRPPELLGCGANQAIVQPGIFANYATQVNLPTPDMHIAPQALLTTVDEAVANQTRPVHINCMYREPLYPSELGGAILDAESPYLKPLQTWLQLARPYTQYGKSKQLSSPSDDAIMRFVHGKGVIVVGTLTPEQDPQQLIALSQKIGWPLLTDAQSQLRQHPAAIGNIDQLLQHPRARNLLQEADRVLVFGGRLLSKRVISYLAEQNWHSYWQVLPEQDRLDPSHNAKHIWHANAEQFAALNWYRSSSANWANTLITYNDELHHLFVRNIDQGEFGEAQVIRAIANTRPLEQQLFIGNSLPVRLYDMYAPVSCCTATTYTNRGASGIDGLLATACGIAAHEGKPTSLIIGDLSQLHDLNSLAIAKGLSSPLVIVILNNDGGNIFNLLPVPNEQVRSDYYRLSHGLEFGYAAAMFNLPYNQVDNLADFQDSYNEALDFQGASIIEVNVSQNQASDQIAALNLWVKQS.

Belongs to the TPP enzyme family. MenD subfamily. Homodimer. The cofactor is Mg(2+). Mn(2+) is required as a cofactor. Thiamine diphosphate serves as cofactor.

The enzyme catalyses isochorismate + 2-oxoglutarate + H(+) = 5-enolpyruvoyl-6-hydroxy-2-succinyl-cyclohex-3-ene-1-carboxylate + CO2. Its pathway is quinol/quinone metabolism; 1,4-dihydroxy-2-naphthoate biosynthesis; 1,4-dihydroxy-2-naphthoate from chorismate: step 2/7. The protein operates within quinol/quinone metabolism; menaquinone biosynthesis. Catalyzes the thiamine diphosphate-dependent decarboxylation of 2-oxoglutarate and the subsequent addition of the resulting succinic semialdehyde-thiamine pyrophosphate anion to isochorismate to yield 2-succinyl-5-enolpyruvyl-6-hydroxy-3-cyclohexene-1-carboxylate (SEPHCHC). The chain is 2-succinyl-5-enolpyruvyl-6-hydroxy-3-cyclohexene-1-carboxylate synthase from Shewanella baltica (strain OS185).